Here is a 336-residue protein sequence, read N- to C-terminus: L-rhamnono-gamma-lactonase (336 aa).

Belongs to the metallo-dependent hydrolases superfamily. A divalent metal cation is required as a cofactor.

The enzyme catalyses L-rhamnono-1,4-lactone + H2O = L-rhamnonate + H(+). With respect to regulation, inhibited by Zn(2+), Fe(2+) and Cu(2+), but not by EDTA. Functionally, hydrolase with high substrate specificity for L-rhamnono-1,4-lactone. Catalyzes the second step in an alternative pathway for rhamnose utilization that does not involve phosphorylated intermediates. The sequence is that of L-rhamnono-gamma-lactonase (LRA2) from Scheffersomyces stipitis (strain ATCC 58785 / CBS 6054 / NBRC 10063 / NRRL Y-11545) (Yeast).